A 120-amino-acid polypeptide reads, in one-letter code: Large ribosomal subunit protein uL18 (120 aa).

The protein belongs to the universal ribosomal protein uL18 family. In terms of assembly, part of the 50S ribosomal subunit; part of the 5S rRNA/L5/L18/L25 subcomplex. Contacts the 5S and 23S rRNAs.

In terms of biological role, this is one of the proteins that bind and probably mediate the attachment of the 5S RNA into the large ribosomal subunit, where it forms part of the central protuberance. This Staphylococcus haemolyticus (strain JCSC1435) protein is Large ribosomal subunit protein uL18.